Reading from the N-terminus, the 533-residue chain is AAA-ATPase At5g17740 (533 aa).

Residues 11–27 form a helical membrane-spanning segment; it reads ASMFSTYASMMGYVMII. ATP is bound at residue 252-259; it reads GPPGTGKS.

Belongs to the AAA ATPase family. BCS1 subfamily. It depends on Mg(2+) as a cofactor.

It localises to the membrane. It catalyses the reaction ATP + H2O = ADP + phosphate + H(+). This chain is AAA-ATPase At5g17740, found in Arabidopsis thaliana (Mouse-ear cress).